The primary structure comprises 198 residues: Recombination protein RecR (198 aa).

The C4-type zinc finger occupies 56-71; the sequence is CTECRDFSETKICAIC. Residues 79–174 enclose the Toprim domain; sequence HQLCVVESPP…RPSRLAQGLP (96 aa).

The protein belongs to the RecR family.

May play a role in DNA repair. It seems to be involved in an RecBC-independent recombinational process of DNA repair. It may act with RecF and RecO. This Xylella fastidiosa (strain Temecula1 / ATCC 700964) protein is Recombination protein RecR.